We begin with the raw amino-acid sequence, 132 residues long: Small ribosomal subunit protein uS8c (132 aa).

The protein belongs to the universal ribosomal protein uS8 family. Part of the 30S ribosomal subunit.

It is found in the plastid. Its subcellular location is the chloroplast. Its function is as follows. One of the primary rRNA binding proteins, it binds directly to 16S rRNA central domain where it helps coordinate assembly of the platform of the 30S subunit. The polypeptide is Small ribosomal subunit protein uS8c (rps8) (Amborella trichopoda).